Reading from the N-terminus, the 359-residue chain is Peptide chain release factor 1 (359 aa).

Gln235 is subject to N5-methylglutamine. Residues 287 to 312 (AQEASAMRSAQVGSGDRSERIRTYNF) form a disordered region.

Belongs to the prokaryotic/mitochondrial release factor family. Methylated by PrmC. Methylation increases the termination efficiency of RF1.

The protein localises to the cytoplasm. Functionally, peptide chain release factor 1 directs the termination of translation in response to the peptide chain termination codons UAG and UAA. The sequence is that of Peptide chain release factor 1 from Chlamydia trachomatis serovar A (strain ATCC VR-571B / DSM 19440 / HAR-13).